The sequence spans 263 residues: tRNA pseudouridine synthase A (263 aa).

The active-site Nucleophile is the Asp73. Residue Tyr131 coordinates substrate.

Belongs to the tRNA pseudouridine synthase TruA family. As to quaternary structure, homodimer.

The catalysed reaction is uridine(38/39/40) in tRNA = pseudouridine(38/39/40) in tRNA. Formation of pseudouridine at positions 38, 39 and 40 in the anticodon stem and loop of transfer RNAs. The sequence is that of tRNA pseudouridine synthase A from Mycoplasmoides gallisepticum (strain R(low / passage 15 / clone 2)) (Mycoplasma gallisepticum).